The chain runs to 148 residues: SPbeta prophage-derived disulfide bond formation protein B (148 aa).

The chain crosses the membrane as a helical span at residues 7 to 26; the sequence is KSFFLLLFFLSFFGTMASLF. A disulfide bridge links cysteine 36 with cysteine 39. Helical transmembrane passes span 41–60 and 67–84; these read YQRIFLYPIPIILLIGLLKK and YVVFLSSIGLIIAFYHYI. Cysteine 95 and cysteine 102 are oxidised to a cystine. Residues 111 to 135 traverse the membrane as a helical segment; it reads GFITLPLMSSVCFALIFGIGLKLII.

This sequence belongs to the DsbB family. BdbC subfamily.

The protein localises to the cell membrane. In terms of biological role, important but not absolutely essential for the production of the lantibiotic sublancin 168, it may also be required for the stability of other secreted proteins. Not required for competence for DNA uptake. The chain is SPbeta prophage-derived disulfide bond formation protein B (bdbB) from Bacillus subtilis (strain 168).